The primary structure comprises 545 residues: Cytochrome P450 10 (545 aa).

Position 493 (Cys493) interacts with heme.

This sequence belongs to the cytochrome P450 family. Heme is required as a cofactor. Abundantly expressed in the female gonadotropic hormone producing dorsal bodies.

Functionally, may be involved in the synthesis of the female gonadotropic hormone produced by the dorsal bodies. In Lymnaea stagnalis (Great pond snail), this protein is Cytochrome P450 10 (CYP10).